A 74-amino-acid chain; its full sequence is Large ribosomal subunit protein uL29 (74 aa).

It belongs to the universal ribosomal protein uL29 family.

This is Large ribosomal subunit protein uL29 (rpmC) from Streptomyces coelicolor (strain ATCC BAA-471 / A3(2) / M145).